The chain runs to 109 residues: Phycoerythrin alpha-2 subunit (109 aa).

D52, S53, E63, R64, C67, T72, K74, A75, and K84 together coordinate (2R,3E)-phycoerythrobilin.

The protein belongs to the phycoerythrin family. Heterotetramer of 2 different alpha chains and 2 identical beta chains which form 2 alpha-beta heterodimers within the heterotetramer. The two alpha-beta heterodimers are rotated to an open configuration in contrast to the closed configuration found in other cryptophyte species due to the insertion of a single amino acid, Asp-65, in a conserved region of the alpha chain. In the open form, the central chromophores are not in physical contact but are separated by a water-filled channel. Contains three phycoerythrobilin chromophores with binding mediated by both the alpha and beta subunits.

Its subcellular location is the plastid. It localises to the chloroplast thylakoid membrane. Functionally, light-harvesting photosynthetic tetrapyrrole chromophore-protein from the phycobiliprotein complex. The sequence is that of Phycoerythrin alpha-2 subunit from Hemiselmis andersenii (Cryptophyte alga).